The primary structure comprises 244 residues: NAD-dependent protein deacetylase (244 aa).

Residues 1-244 (MDDKINKLKE…IGKVLGKVID (244 aa)) enclose the Deacetylase sirtuin-type domain. Positions 24, 28, 35, 36, 105, 107, 108, and 123 each coordinate NAD(+). Phenylalanine 35 contacts nicotinamide. Nicotinamide contacts are provided by isoleucine 107 and aspartate 108. Histidine 123 serves as the catalytic Proton acceptor. Zn(2+) contacts are provided by cysteine 131, cysteine 134, cysteine 152, and cysteine 155. NAD(+) contacts are provided by threonine 193, serine 194, asparagine 217, and isoleucine 235.

This sequence belongs to the sirtuin family. Class U subfamily. The cofactor is Zn(2+).

The protein resides in the cytoplasm. It carries out the reaction N(6)-acetyl-L-lysyl-[protein] + NAD(+) + H2O = 2''-O-acetyl-ADP-D-ribose + nicotinamide + L-lysyl-[protein]. In terms of biological role, NAD-dependent protein deacetylase which modulates the activities of several enzymes which are inactive in their acetylated form. This is NAD-dependent protein deacetylase from Clostridium perfringens (strain 13 / Type A).